The chain runs to 237 residues: Cyclic nucleotide phosphodiesterase inhibitor (237 aa).

Residues 1-20 (MAKIIISLILLLSLFSFSYG) form the signal peptide. N-linked (GlcNAc...) asparagine glycosylation is found at Asn28, Asn65, and Asn70. 5 Cys-rich CT repeats span residues 57-81 (DLCHNSACNASTGNCTLTTISCNDN), 82-105 (NPCTDDFCHPGYGCYSVPNSCDPG), 116-139 (DPCTYDFCDALNICRHSETYCNDG), 140-162 (DACTLNTCGVNGCNFTKISCDDN), and 163-186 (DPCTADYCSTLYGCYHEPIECSIK). Asn153 is a glycosylation site (N-linked (GlcNAc...) asparagine). N-linked (GlcNAc...) asparagine glycosylation is present at Asn207.

Its function is as follows. PDI acts by binding stoichiometrically to cyclic nucleotide phosphodiesterase, changing the KM of the enzyme for cAMP from 10 uM to 2 mM. The polypeptide is Cyclic nucleotide phosphodiesterase inhibitor (pdiA) (Dictyostelium discoideum (Social amoeba)).